A 785-amino-acid polypeptide reads, in one-letter code: Mitochondrial intermediate peptidase (785 aa).

The transit peptide at 1–43 (MLTRPAQNALLKSMQPLFRFRGCLLAKSTSTPRRDISTSSRKL) directs the protein to the mitochondrion. His567 provides a ligand contact to Zn(2+). The active site involves Glu568. Residues His571 and His574 each coordinate Zn(2+).

The protein belongs to the peptidase M3 family. Zn(2+) is required as a cofactor.

It is found in the mitochondrion matrix. The enzyme catalyses Release of an N-terminal octapeptide as second stage of processing of some proteins imported into the mitochondrion.. Its function is as follows. Cleaves proteins, imported into the mitochondrion, to their mature size. While most mitochondrial precursor proteins are processed to the mature form in one step by mitochondrial processing peptidase (MPP), the sequential cleavage by MIP of an octapeptide after initial processing by MPP is a required step for a subgroup of nuclear-encoded precursor proteins destined for the matrix or the inner membrane. This Pleurotus djamor (Pink oyster mushroom) protein is Mitochondrial intermediate peptidase (OCT1).